Reading from the N-terminus, the 276-residue chain is 2-dehydro-3-deoxyphosphooctonate aldolase (276 aa).

It belongs to the KdsA family.

It is found in the cytoplasm. The catalysed reaction is D-arabinose 5-phosphate + phosphoenolpyruvate + H2O = 3-deoxy-alpha-D-manno-2-octulosonate-8-phosphate + phosphate. It participates in carbohydrate biosynthesis; 3-deoxy-D-manno-octulosonate biosynthesis; 3-deoxy-D-manno-octulosonate from D-ribulose 5-phosphate: step 2/3. Its pathway is bacterial outer membrane biogenesis; lipopolysaccharide biosynthesis. This Helicobacter pylori (strain P12) protein is 2-dehydro-3-deoxyphosphooctonate aldolase.